The following is a 520-amino-acid chain: GMP synthase [glutamine-hydrolyzing] (520 aa).

Positions 12–205 (KIIVLDYGSQ…AISICGARGD (194 aa)) constitute a Glutamine amidotransferase type-1 domain. Catalysis depends on cysteine 89, which acts as the Nucleophile. Catalysis depends on residues histidine 179 and glutamate 181. The GMPS ATP-PPase domain occupies 206 to 395 (WSMDNFIDME…LGMPEEIVWR (190 aa)). Residue 233 to 239 (SGGVDSS) coordinates ATP.

In terms of assembly, homodimer.

It carries out the reaction XMP + L-glutamine + ATP + H2O = GMP + L-glutamate + AMP + diphosphate + 2 H(+). Its pathway is purine metabolism; GMP biosynthesis; GMP from XMP (L-Gln route): step 1/1. Its function is as follows. Catalyzes the synthesis of GMP from XMP. In Streptococcus pyogenes serotype M3 (strain SSI-1), this protein is GMP synthase [glutamine-hydrolyzing].